A 241-amino-acid chain; its full sequence is MSGCQAQGDCCSRPCGAQDKEHPRFLIPELCKQFYHLGWVTGTGGGISLKHGNEIYIAPSGVQKERIQPEDMFVCDINEQDISGPPASKKLKKSQCTPLFMNAYTMRGAGAVIHTHSKAAVMATLLFPGQEFKITHQEMIKGIRKCTSGGYYRYDDMLVVPIIENTPEEKDLKERMAHAMNEYPDSCAVLVRRHGVYVWGETWEKAKTMCECYDYLFDIAVSMKKMGLDPTQLPVGENGIV.

Residue Cys-96 coordinates substrate. The Zn(2+) site is built by His-114 and His-116. Glu-138 acts as the Proton donor/acceptor in catalysis. A Zn(2+)-binding site is contributed by His-194.

Belongs to the aldolase class II family. MtnB subfamily. As to quaternary structure, homotetramer. Interacts with APAF1. May interact with CASP1. The cofactor is Zn(2+). As to expression, expressed in skeletal muscle (at protein level).

It is found in the cytoplasm. The enzyme catalyses 5-(methylsulfanyl)-D-ribulose 1-phosphate = 5-methylsulfanyl-2,3-dioxopentyl phosphate + H2O. It functions in the pathway amino-acid biosynthesis; L-methionine biosynthesis via salvage pathway; L-methionine from S-methyl-5-thio-alpha-D-ribose 1-phosphate: step 2/6. Its function is as follows. Catalyzes the dehydration of methylthioribulose-1-phosphate (MTRu-1-P) into 2,3-diketo-5-methylthiopentyl-1-phosphate (DK-MTP-1-P). Functions in the methionine salvage pathway, which plays a key role in cancer, apoptosis, microbial proliferation and inflammation. May inhibit the CASP1-related inflammatory response (pyroptosis), the CASP9-dependent apoptotic pathway and the cytochrome c-dependent and APAF1-mediated cell death. The chain is Methylthioribulose-1-phosphate dehydratase from Mus musculus (Mouse).